The sequence spans 265 residues: Mlc titration factor A (265 aa).

Positions 111, 148, 152, and 211 each coordinate Zn(2+).

The protein belongs to the MtfA family. Interacts with Mlc with high affinity. Zn(2+) serves as cofactor.

Its subcellular location is the cytoplasm. Proteolytic activity is stimulated by interaction with Mlc. Addition of the chelators EDTA or phenanthroline significantly reduces the peptidase activity, whereas the addition of other protease inhibitors has much less effect. In terms of biological role, involved in the modulation of the activity of the glucose-phosphotransferase system (glucose-PTS). Interacts with the transcriptional repressor Mlc, preventing its interaction with DNA and leading to the modulation of expression of genes regulated by Mlc, including ptsG, which encodes the PTS system glucose-specific EIICB component. Its function is as follows. Shows zinc-dependent metallopeptidase activity. In vitro, can cleave several artificial substrates. The greatest activity and specificity is observed for L-alanine fused to 4-nitroanilide (L-alanine-pNA). Shows significantly lower activity towards L-arginine-pNA, L-proline-pNA, hippuryl-L-phenylalanine and hippuryl-L-arginine, and cannot use FTC-casein. Mlc does not appear to be a biologically relevant peptidase substrate. Biologically relevant targets may have a function in growth transition under changing environmental conditions. The chain is Mlc titration factor A from Escherichia coli (strain K12).